Here is a 162-residue protein sequence, read N- to C-terminus: Beta-lactoglobulin (162 aa).

Intrachain disulfides connect Cys-66–Cys-160, Cys-106–Cys-119, and Cys-106–Cys-121.

It belongs to the calycin superfamily. Lipocalin family. As to quaternary structure, under physiological conditions beta-lactoglobulin exists as an equilibrium mixture of monomeric and dimeric forms. In terms of processing, alternate disulfide bonds occur in equal amounts.

The protein resides in the secreted. Functionally, lactoglobulin is the primary component of whey, it binds retinol and is probably involved in the transport of that molecule. The sequence is that of Beta-lactoglobulin (LGB) from Ovis aries musimon (Mouflon).